Reading from the N-terminus, the 306-residue chain is tRNA pseudouridine synthase B (306 aa).

Asp-48 functions as the Nucleophile in the catalytic mechanism.

This sequence belongs to the pseudouridine synthase TruB family. Type 1 subfamily.

The catalysed reaction is uridine(55) in tRNA = pseudouridine(55) in tRNA. In terms of biological role, responsible for synthesis of pseudouridine from uracil-55 in the psi GC loop of transfer RNAs. In Chromobacterium violaceum (strain ATCC 12472 / DSM 30191 / JCM 1249 / CCUG 213 / NBRC 12614 / NCIMB 9131 / NCTC 9757 / MK), this protein is tRNA pseudouridine synthase B.